A 169-amino-acid chain; its full sequence is Putative phosphoesterase SE_0715 (169 aa).

His-34 functions as the Proton donor in the catalytic mechanism. 2 consecutive short sequence motifs (HXTX) follow at residues 34-37 (HITI) and 115-118 (HFTI). His-115 serves as the catalytic Proton acceptor.

The protein belongs to the 2H phosphoesterase superfamily. YjcG family.

The sequence is that of Putative phosphoesterase SE_0715 from Staphylococcus epidermidis (strain ATCC 12228 / FDA PCI 1200).